Here is a 535-residue protein sequence, read N- to C-terminus: Peptide chain release factor 3 (535 aa).

The region spanning Lys8–Gly277 is the tr-type G domain. Residues Ser17–Thr24, Asp85–His89, and Asn139–Asp142 each bind GTP.

It belongs to the TRAFAC class translation factor GTPase superfamily. Classic translation factor GTPase family. PrfC subfamily.

It localises to the cytoplasm. Functionally, increases the formation of ribosomal termination complexes and stimulates activities of RF-1 and RF-2. It binds guanine nucleotides and has strong preference for UGA stop codons. It may interact directly with the ribosome. The stimulation of RF-1 and RF-2 is significantly reduced by GTP and GDP, but not by GMP. The polypeptide is Peptide chain release factor 3 (Nitrosomonas eutropha (strain DSM 101675 / C91 / Nm57)).